The chain runs to 488 residues: 3-octaprenyl-4-hydroxybenzoate carboxy-lyase (488 aa).

Asparagine 172 provides a ligand contact to Mn(2+). Residues isoleucine 175–arginine 177, arginine 189–leucine 191, and arginine 194–glycine 195 contribute to the prenylated FMN site. Glutamate 238 provides a ligand contact to Mn(2+). Residue aspartate 287 is the Proton donor of the active site.

Belongs to the UbiD family. Homohexamer. Prenylated FMN serves as cofactor. The cofactor is Mn(2+).

Its subcellular location is the cell membrane. The catalysed reaction is a 4-hydroxy-3-(all-trans-polyprenyl)benzoate + H(+) = a 2-(all-trans-polyprenyl)phenol + CO2. The protein operates within cofactor biosynthesis; ubiquinone biosynthesis. Its function is as follows. Catalyzes the decarboxylation of 3-octaprenyl-4-hydroxy benzoate to 2-octaprenylphenol, an intermediate step in ubiquinone biosynthesis. In Alkalilimnicola ehrlichii (strain ATCC BAA-1101 / DSM 17681 / MLHE-1), this protein is 3-octaprenyl-4-hydroxybenzoate carboxy-lyase.